Consider the following 593-residue polypeptide: MEDYKKRIKNKLNVVPMEPGCYLMKDRNDQVIYVGKAKKLRNRLRSYFTGAHDAKTTRLVGEIRRFEFIVTSSETESLLLELNLIKQYQPRYNILLKDDKSYPFIKITKEKYPRLLVTRTVKQGTGKYFGPYPNAYSAQETKKLLDRIYPYRKCDKMPDKLCLYYHIGQCLGPCVYDVDLSKYAQMTKEITDFLNGEDKTILKSLEERMLTASESLDFERAKEYRDLIQHIQNLTNKQKIMSSDKTIRDVFGYSVDKGWMCIQVFFIRQGNMIKRDTTMIPLQQTEEEEFYTFIGQFYSLNQHILPKEVHVPRNLDKEMIQSVVDTKIVQPARGPKKDMVDLAAHNAKVSLNNKFELISRDESRTIKAIEELGTQMGIQTPIRIEAFDNSNIQGVDPVSAMVTFVDGKPDKKNYRKYKIKTVKGPDDYKSMREVVRRRYSRVLNEGLPLPDLIIVDGGKGHMNGVIDVLQNELGLDIPVAGLQKNDKHQTSELLYGASAEIVPLKKNSQAFYLLHRIQDEVHRFAITFHRQTRQKTGLKSILDDIDGIGSKRKTLLLRSFGSIKKMKEATLEDFKNIGIPENVAKNLHEQLHK.

Residues 17 to 94 (MEPGCYLMKD…IKQYQPRYNI (78 aa)) form the GIY-YIG domain. A UVR domain is found at 199–234 (KTILKSLEERMLTASESLDFERAKEYRDLIQHIQNL).

The protein belongs to the UvrC family. Interacts with UvrB in an incision complex.

Its subcellular location is the cytoplasm. Its function is as follows. The UvrABC repair system catalyzes the recognition and processing of DNA lesions. UvrC both incises the 5' and 3' sides of the lesion. The N-terminal half is responsible for the 3' incision and the C-terminal half is responsible for the 5' incision. The chain is UvrABC system protein C from Staphylococcus aureus (strain MRSA252).